Consider the following 326-residue polypeptide: Negative regulator of the PHO system (326 aa).

The Protein kinase domain occupies 8 to 290 (FQQLEKLGEG…ARQALQHPWF (283 aa)). ATP-binding positions include 14–22 (LGEGTYATV) and Lys-37. The Proton acceptor role is filled by Asp-131. Residues 300–326 (PQHLSDPYQQQQQQQQHPHQPIIDQQY) form a disordered region. Low complexity predominate over residues 305 to 326 (DPYQQQQQQQQHPHQPIIDQQY).

This sequence belongs to the protein kinase superfamily. CMGC Ser/Thr protein kinase family. CDC2/CDKX subfamily. As to quaternary structure, interacts with a number of cyclins.

It carries out the reaction L-seryl-[protein] + ATP = O-phospho-L-seryl-[protein] + ADP + H(+). The catalysed reaction is L-threonyl-[protein] + ATP = O-phospho-L-threonyl-[protein] + ADP + H(+). Functionally, when phosphate concentrations are high it phosphorylates the PHO4 transcription factor thus establishing repression. This Candida albicans (Yeast) protein is Negative regulator of the PHO system (PHO85).